The following is a 237-amino-acid chain: (5-formylfuran-3-yl)methyl phosphate synthase (237 aa).

K29 (schiff-base intermediate with substrate) is an active-site residue. The Proton acceptor role is filled by K87.

This sequence belongs to the MfnB family.

It catalyses the reaction 2 D-glyceraldehyde 3-phosphate = 4-(hydroxymethyl)-2-furancarboxaldehyde phosphate + phosphate + 2 H2O. The protein operates within cofactor biosynthesis; methanofuran biosynthesis. Its function is as follows. Catalyzes the formation of 4-(hydroxymethyl)-2-furancarboxaldehyde phosphate (4-HFC-P) from two molecules of glyceraldehyde-3-P (GA-3-P). This Methanopyrus kandleri (strain AV19 / DSM 6324 / JCM 9639 / NBRC 100938) protein is (5-formylfuran-3-yl)methyl phosphate synthase.